An 831-amino-acid polypeptide reads, in one-letter code: Cation/H(+) symporter 13 (831 aa).

12 helical membrane passes run 50–70 (YALP…RLIF), 89–109 (VVLG…FLPA), 112–132 (KIII…LLGL), 147–167 (ILIG…TIMF), 214–234 (LATH…LAFN), 250–270 (MIIG…VWLT), 282–302 (VVPF…GEAM), 303–323 (GVHA…GPPL), 334–354 (FASN…TNFF), 364–384 (VVMI…GTAA), 397–417 (LCLA…TIVW), and 430–450 (LVII…VYLY).

The protein belongs to the monovalent cation:proton antiporter 2 (CPA2) transporter (TC 2.A.37) family. CHX (TC 2.A.37.4) subfamily. As to expression, preferentially expressed in pollen before and after germination. Detected in pollen grains within anthers of the flower buds or in pollen on fully open flowers and on the stigma, and in pollen tubes growing in the style. Weakly expressed in roots.

Its subcellular location is the cell membrane. Functionally, high-affinity potassium transporter that plays a role in K(+) acquisition. May operate as a K(+)/H(+) symporter. In Arabidopsis thaliana (Mouse-ear cress), this protein is Cation/H(+) symporter 13 (CHX13).